Here is a 580-residue protein sequence, read N- to C-terminus: Arginine--tRNA ligase (580 aa).

The 'HIGH' region motif lies at Ala131 to His141.

It belongs to the class-I aminoacyl-tRNA synthetase family. As to quaternary structure, monomer.

It is found in the cytoplasm. The catalysed reaction is tRNA(Arg) + L-arginine + ATP = L-arginyl-tRNA(Arg) + AMP + diphosphate. The protein is Arginine--tRNA ligase of Cereibacter sphaeroides (strain ATCC 17023 / DSM 158 / JCM 6121 / CCUG 31486 / LMG 2827 / NBRC 12203 / NCIMB 8253 / ATH 2.4.1.) (Rhodobacter sphaeroides).